The primary structure comprises 185 residues: Ribosome-recycling factor (185 aa).

It belongs to the RRF family.

Its subcellular location is the cytoplasm. Its function is as follows. Responsible for the release of ribosomes from messenger RNA at the termination of protein biosynthesis. May increase the efficiency of translation by recycling ribosomes from one round of translation to another. This is Ribosome-recycling factor from Frankia casuarinae (strain DSM 45818 / CECT 9043 / HFP020203 / CcI3).